Here is a 328-residue protein sequence, read N- to C-terminus: Cell division protein ZipA (328 aa).

Over 1–6 (MMQDLR) the chain is Periplasmic. Residues 7–27 (LILIVVGAIAIIALLLHGLWT) form a helical membrane-spanning segment. The Cytoplasmic segment spans residues 28–328 (SRKERSSLFR…REVLDANTIA (301 aa)). The segment covering 61–72 (GEVRVRTSHPQE) has biased composition (basic and acidic residues). Residues 61–183 (GEVRVRTSHP…EPVAPAPEAK (123 aa)) form a disordered region. Composition is skewed to polar residues over residues 95–104 (KSAQVKTASR) and 164–174 (APQQHVESQQE).

Belongs to the ZipA family. As to quaternary structure, interacts with FtsZ via their C-terminal domains.

Its subcellular location is the cell inner membrane. Functionally, essential cell division protein that stabilizes the FtsZ protofilaments by cross-linking them and that serves as a cytoplasmic membrane anchor for the Z ring. Also required for the recruitment to the septal ring of downstream cell division proteins. The chain is Cell division protein ZipA from Yersinia pestis bv. Antiqua (strain Antiqua).